The following is a 45-amino-acid chain: Cytochrome b559 subunit beta (45 aa).

The helical transmembrane segment at tryptophan 20–alanine 36 threads the bilayer. Heme is bound at residue histidine 24.

The protein belongs to the PsbE/PsbF family. Heterodimer of an alpha subunit and a beta subunit. PSII is composed of 1 copy each of membrane proteins PsbA, PsbB, PsbC, PsbD, PsbE, PsbF, PsbH, PsbI, PsbJ, PsbK, PsbL, PsbM, PsbT, PsbX, PsbY, PsbZ, Psb30/Ycf12, peripheral proteins PsbO, CyanoQ (PsbQ), PsbU, PsbV and a large number of cofactors. It forms dimeric complexes. Heme b is required as a cofactor.

It is found in the cellular thylakoid membrane. Its function is as follows. This b-type cytochrome is tightly associated with the reaction center of photosystem II (PSII). PSII is a light-driven water:plastoquinone oxidoreductase that uses light energy to abstract electrons from H(2)O, generating O(2) and a proton gradient subsequently used for ATP formation. It consists of a core antenna complex that captures photons, and an electron transfer chain that converts photonic excitation into a charge separation. In Trichormus variabilis (strain ATCC 29413 / PCC 7937) (Anabaena variabilis), this protein is Cytochrome b559 subunit beta.